A 466-amino-acid chain; its full sequence is Aladin (466 aa).

WD repeat units lie at residues 135-174, 179-218, 229-269, 271-310, and 378-418; these read WLNS…TTAT, PSQT…HLGR, PNNL…MQPL, RLGP…TTER, and LVGG…FDLQ.

It localises to the nucleus. Its subcellular location is the nuclear pore complex. The protein resides in the cytoplasm. It is found in the cytoskeleton. The protein localises to the spindle. Involved in mitotic spindle assembly. This is Aladin from Drosophila melanogaster (Fruit fly).